The primary structure comprises 140 residues: Small ribosomal subunit protein uS12 (140 aa).

A disordered region spans residues 33–55 (KEQTNVSSPQKRGVCTRVGTMTP). 3-methylthioaspartic acid is present on aspartate 102.

This sequence belongs to the universal ribosomal protein uS12 family. As to quaternary structure, part of the 30S ribosomal subunit. Contacts proteins S8 and S17. May interact with IF1 in the 30S initiation complex.

Its function is as follows. With S4 and S5 plays an important role in translational accuracy. In terms of biological role, interacts with and stabilizes bases of the 16S rRNA that are involved in tRNA selection in the A site and with the mRNA backbone. Located at the interface of the 30S and 50S subunits, it traverses the body of the 30S subunit contacting proteins on the other side and probably holding the rRNA structure together. The combined cluster of proteins S8, S12 and S17 appears to hold together the shoulder and platform of the 30S subunit. This chain is Small ribosomal subunit protein uS12, found in Geobacillus thermodenitrificans (strain NG80-2).